A 419-amino-acid polypeptide reads, in one-letter code: Tol-Pal system protein TolB (419 aa).

Positions 1-19 (MFNRIISLFLLLFTGQVIA) are cleaved as a signal peptide.

The protein belongs to the TolB family. In terms of assembly, the Tol-Pal system is composed of five core proteins: the inner membrane proteins TolA, TolQ and TolR, the periplasmic protein TolB and the outer membrane protein Pal. They form a network linking the inner and outer membranes and the peptidoglycan layer.

Its subcellular location is the periplasm. Functionally, part of the Tol-Pal system, which plays a role in outer membrane invagination during cell division and is important for maintaining outer membrane integrity. This Legionella pneumophila subsp. pneumophila (strain Philadelphia 1 / ATCC 33152 / DSM 7513) protein is Tol-Pal system protein TolB.